A 562-amino-acid chain; its full sequence is Cytosolic invertase 1 (562 aa).

The protein belongs to the glycosyl hydrolase 100 family.

Its subcellular location is the cytoplasm. The protein localises to the cytosol. It catalyses the reaction Hydrolysis of terminal non-reducing beta-D-fructofuranoside residues in beta-D-fructofuranosides.. Cytosolic invertase that cleaves sucrose into glucose and fructose and is involved in the regulation of primary root elongation, lateral root formation, floral transition and pollen development. The chain is Cytosolic invertase 1 from Oryza sativa subsp. japonica (Rice).